Consider the following 148-residue polypeptide: Ubiquitin-conjugating enzyme E2 30 (148 aa).

One can recognise a UBC core domain in the interval 1-147 (MASKRINKEL…AQSWTQKYAM (147 aa)). The active-site Glycyl thioester intermediate is Cys-85.

It belongs to the ubiquitin-conjugating enzyme family. In terms of assembly, interacts with RGLG3 and RGLG4. In terms of tissue distribution, ubiquitously expressed at very low levels.

The catalysed reaction is S-ubiquitinyl-[E1 ubiquitin-activating enzyme]-L-cysteine + [E2 ubiquitin-conjugating enzyme]-L-cysteine = [E1 ubiquitin-activating enzyme]-L-cysteine + S-ubiquitinyl-[E2 ubiquitin-conjugating enzyme]-L-cysteine.. It participates in protein modification; protein ubiquitination. Accepts the ubiquitin from the E1 complex and catalyzes its covalent attachment to other proteins. This Arabidopsis thaliana (Mouse-ear cress) protein is Ubiquitin-conjugating enzyme E2 30 (UBC30).